Consider the following 132-residue polypeptide: uncharacterized protein (132 aa).

The next 4 helical transmembrane spans lie at 7–29 (LALL…PTLF), 44–62 (VFPV…SLFL), 69–88 (LFLS…EFIV), and 108–130 (GVSM…ILIF).

It localises to the cell membrane. This is an uncharacterized protein from Aquifex aeolicus (strain VF5).